Consider the following 252-residue polypeptide: uncharacterized protein (252 aa).

Residues 1 to 25 (MRKKKFLSRFAFGSLFLLCGTILSA) form the signal peptide. The N-palmitoyl cysteine moiety is linked to residue Cys26. Cys26 carries the S-diacylglycerol cysteine lipid modification.

Belongs to the MG439/MG440 family.

Its subcellular location is the cell membrane. This is an uncharacterized protein from Mycoplasma pneumoniae (strain ATCC 29342 / M129 / Subtype 1) (Mycoplasmoides pneumoniae).